The chain runs to 200 residues: Neutrophil gelatinase-associated lipocalin (200 aa).

Residues M1–A20 form the signal peptide. Q21 carries the pyrrolidone carboxylic acid modification. Residue Y72–T74 coordinates a carboxymycobactin. N81 and N85 each carry an N-linked (GlcNAc...) asparagine glycan. A disulfide bridge links C98 with C197. Y128 is a binding site for enterobactin. 3 residues coordinate a carboxymycobactin: K147, K156, and Y160. K156 lines the enterobactin pocket.

The protein belongs to the calycin superfamily. Lipocalin family. Monomer. Homodimer; disulfide-linked. Heterodimer; disulfide-linked with MMP9. In terms of processing, N-glycosylated. Expressed in the cortical tubules of the kidney (at protein level). Also expressed in the medullary tubules of the kidney. Detected in lung, spleen, uterus, vagina and epididymis.

It localises to the secreted. The protein localises to the cytoplasmic granule lumen. It is found in the cytoplasmic vesicle lumen. Functionally, iron-trafficking protein involved in multiple processes such as apoptosis, innate immunity and renal development. Binds iron through association with 2,3-dihydroxybenzoic acid (2,3-DHBA), a siderophore that shares structural similarities with bacterial enterobactin, and delivers or removes iron from the cell, depending on the context. Iron-bound form (holo-24p3) is internalized following binding to the SLC22A17 (24p3R) receptor, leading to release of iron and subsequent increase of intracellular iron concentration. In contrast, association of the iron-free form (apo-24p3) with the SLC22A17 (24p3R) receptor is followed by association with an intracellular siderophore, iron chelation and iron transfer to the extracellular medium, thereby reducing intracellular iron concentration. Involved in apoptosis due to interleukin-3 (IL3) deprivation: iron-loaded form increases intracellular iron concentration without promoting apoptosis, while iron-free form decreases intracellular iron levels, inducing expression of the proapoptotic protein BCL2L11/BIM, resulting in apoptosis. Involved in innate immunity; limits bacterial proliferation by sequestering iron bound to microbial siderophores, such as enterobactin. Can also bind siderophores from M.tuberculosis. The polypeptide is Neutrophil gelatinase-associated lipocalin (Lcn2) (Mus musculus (Mouse)).